Reading from the N-terminus, the 463-residue chain is MTDIDIDTIINRSLHALENSEYSEFDLLLNQLSYLIKQSVNSNNKTASKEQITRILDYTPNNFNQVESLRLYRGLLILVRNFAPLLDIDLFPIVANSFEKFLKALNQTSEWTDRIIEVYWQILANFQRNEFTEVANEFFGQWESKYKWKDIPVSVMSPVIHFLFRQFNTQDPHITNENLLSLLKLFETNHVMNAVYEIFTMIDFADTNNIGHDNKMFIHLLYDIITHESFQKWIEQQNEEETITKWLSLTSVIVQTKTDWNNYELIALLSWNGSLFMKYAPLINSNCNTTVNGEDDFGYVEDDISAITAIFAELSQFNATKQYFEHYEDLLPKLIFVFKWIHDNIEPITIKSSKIEEVGRYSSVKTNIITILSYLSYDSFQFQEKIRELGGLSLVLSNCIIDNNNPFIKEQAIVCLKYLLQKNPKNQQFVADLEAKKVVDDQVLSEVGYQVEVIDGKVAVKRK.

The protein belongs to the ataxin-10 family.

The protein resides in the cytoplasm. Its function is as follows. May play a role in the regulation of cytokinesis. This chain is Ataxin-10 homolog (CTR86), found in Candida albicans (strain SC5314 / ATCC MYA-2876) (Yeast).